The primary structure comprises 145 residues: Large ribosomal subunit protein uL13 (145 aa).

The protein belongs to the universal ribosomal protein uL13 family. In terms of assembly, part of the 50S ribosomal subunit.

Its function is as follows. This protein is one of the early assembly proteins of the 50S ribosomal subunit, although it is not seen to bind rRNA by itself. It is important during the early stages of 50S assembly. The sequence is that of Large ribosomal subunit protein uL13 from Bacillus cereus (strain ZK / E33L).